A 210-amino-acid chain; its full sequence is UPF0173 protein PF0020 (210 aa).

It belongs to the UPF0173 family.

In Pyrococcus furiosus (strain ATCC 43587 / DSM 3638 / JCM 8422 / Vc1), this protein is UPF0173 protein PF0020.